The sequence spans 368 residues: 7,8-didemethyl-8-hydroxy-5-deazariboflavin synthase (368 aa).

In terms of domain architecture, Radical SAM core spans 36–272 (LSYCRNVFLP…EEVSVQVPPN (237 aa)). Positions 50, 54, and 57 each coordinate [4Fe-4S] cluster.

Belongs to the radical SAM superfamily. CofG family. In terms of assembly, consists of two subunits, CofG and CofH. [4Fe-4S] cluster is required as a cofactor.

The enzyme catalyses 5-amino-5-(4-hydroxybenzyl)-6-(D-ribitylimino)-5,6-dihydrouracil + S-adenosyl-L-methionine = 7,8-didemethyl-8-hydroxy-5-deazariboflavin + 5'-deoxyadenosine + L-methionine + NH4(+) + H(+). The protein operates within cofactor biosynthesis; coenzyme F0 biosynthesis. Functionally, catalyzes the radical-mediated synthesis of 7,8-didemethyl-8-hydroxy-5-deazariboflavin from 5-amino-5-(4-hydroxybenzyl)-6-(D-ribitylimino)-5,6-dihydrouracil. This chain is 7,8-didemethyl-8-hydroxy-5-deazariboflavin synthase, found in Haloarcula marismortui (strain ATCC 43049 / DSM 3752 / JCM 8966 / VKM B-1809) (Halobacterium marismortui).